Consider the following 160-residue polypeptide: ATP synthase subunit b (160 aa).

The helical transmembrane segment at 12–32 (ISFVLFVWFCMKYVWYPFISI) threads the bilayer.

This sequence belongs to the ATPase B chain family. As to quaternary structure, F-type ATPases have 2 components, F(1) - the catalytic core - and F(0) - the membrane proton channel. F(1) has five subunits: alpha(3), beta(3), gamma(1), delta(1), epsilon(1). F(0) has three main subunits: a(1), b(2) and c(10-14). The alpha and beta chains form an alternating ring which encloses part of the gamma chain. F(1) is attached to F(0) by a central stalk formed by the gamma and epsilon chains, while a peripheral stalk is formed by the delta and b chains.

The protein resides in the cell inner membrane. In terms of biological role, f(1)F(0) ATP synthase produces ATP from ADP in the presence of a proton or sodium gradient. F-type ATPases consist of two structural domains, F(1) containing the extramembraneous catalytic core and F(0) containing the membrane proton channel, linked together by a central stalk and a peripheral stalk. During catalysis, ATP synthesis in the catalytic domain of F(1) is coupled via a rotary mechanism of the central stalk subunits to proton translocation. Component of the F(0) channel, it forms part of the peripheral stalk, linking F(1) to F(0). This chain is ATP synthase subunit b, found in Blochmanniella pennsylvanica (strain BPEN).